The chain runs to 515 residues: Lysosomal acid glucosylceramidase (515 aa).

A signal peptide spans 1–19 (MAARLIGFFLFQAVSWAYG). 2 cysteine pairs are disulfide-bonded: Cys-23–Cys-35 and Cys-37–Cys-42. N-linked (GlcNAc...) asparagine glycans are attached at residues Asn-38 and Asn-78. Asn-165 carries N-linked (GlcNAc...) (high mannose) asparagine glycosylation. Residue Glu-254 is the Proton donor of the active site. Residue Asn-289 is glycosylated (N-linked (GlcNAc...) asparagine). The active-site Nucleophile is the Glu-358. Residue Asn-480 is glycosylated (N-linked (GlcNAc...) asparagine).

It belongs to the glycosyl hydrolase 30 family. Interacts with saposin-C. Interacts with SCARB2. Interacts with TCP1. Interacts with GRN; this interaction prevents aggregation of GBA1-SCARB2 complex via interaction with HSPA1A upon stress.

Its subcellular location is the lysosome membrane. The enzyme catalyses a beta-D-glucosyl-(1&lt;-&gt;1')-N-acylsphing-4-enine + H2O = an N-acylsphing-4-enine + D-glucose. The catalysed reaction is a beta-D-galactosyl-(1&lt;-&gt;1')-N-acylsphing-4-enine + H2O = an N-acylsphing-4-enine + D-galactose. It catalyses the reaction cholesteryl 3-beta-D-glucoside + H2O = cholesterol + D-glucose. It carries out the reaction a beta-D-glucosyl-(1&lt;-&gt;1')-N-acylsphing-4-enine + cholesterol = cholesteryl 3-beta-D-glucoside + an N-acylsphing-4-enine. The enzyme catalyses beta-D-glucosyl-(1&lt;-&gt;1')-N-hexadecanoylsphing-4-enine + cholesterol = cholesteryl 3-beta-D-glucoside + N-hexadecanoylsphing-4-enine. The catalysed reaction is beta-D-glucosyl-N-(9Z-octadecenoyl)-sphing-4E-enine + cholesterol = N-(9Z-octadecenoyl)-sphing-4-enine + cholesteryl 3-beta-D-glucoside. It catalyses the reaction beta-D-glucosyl-N-octanoylsphing-4E-enine + cholesterol = N-octanoylsphing-4-enine + cholesteryl 3-beta-D-glucoside. It carries out the reaction beta-D-glucosyl-N-dodecanoylsphing-4-enine + cholesterol = N-dodecanoylsphing-4-enine + cholesteryl 3-beta-D-glucoside. The enzyme catalyses beta-D-glucosyl-(1&lt;-&gt;1)-N-octadecanoylsphing-4-enine + cholesterol = N-octadecanoylsphing-4-enine + cholesteryl 3-beta-D-glucoside. The catalysed reaction is beta-D-glucosyl-(1&lt;-&gt;1')-N-(15Z-tetracosenoyl)-sphing-4-enine + cholesterol = N-(15Z-tetracosenoyl)-sphing-4-enine + cholesteryl 3-beta-D-glucoside. It catalyses the reaction a beta-D-galactosyl-(1&lt;-&gt;1')-N-acylsphing-4-enine + cholesterol = cholesteryl 3-beta-D-galactoside + an N-acylsphing-4-enine. It carries out the reaction 1-(beta-D-galactosyl)-N-dodecanoylsphing-4-enine + cholesterol = cholesteryl 3-beta-D-galactoside + N-dodecanoylsphing-4-enine. The enzyme catalyses a beta-D-xylosyl-(1&lt;-&gt;1')-N-acylsphing-4-enine + cholesterol = cholesteryl 3-beta-D-xyloside + an N-acylsphing-4-enine. The catalysed reaction is beta-D-xylosyl-(1&lt;-&gt;1')-N-(9Z-octadecenoyl)-sphing-4-enine + cholesterol = cholesteryl 3-beta-D-xyloside + N-(9Z-octadecenoyl)-sphing-4-enine. It participates in steroid metabolism; cholesterol metabolism. It functions in the pathway sphingolipid metabolism. With respect to regulation, inhibited by conduritol B epoxide/CBE. Its function is as follows. Glucosylceramidase that catalyzes, within the lysosomal compartment, the hydrolysis of glucosylceramides/GlcCers (such as beta-D-glucosyl-(1&lt;-&gt;1')-N-acylsphing-4-enine) into free ceramides (such as N-acylsphing-4-enine) and glucose. Plays a central role in the degradation of complex lipids and the turnover of cellular membranes. Through the production of ceramides, participates in the PKC-activated salvage pathway of ceramide formation. Catalyzes the glucosylation of cholesterol, through a transglucosylation reaction where glucose is transferred from GlcCer to cholesterol. GlcCer containing mono-unsaturated fatty acids (such as beta-D-glucosyl-N-(9Z-octadecenoyl)-sphing-4-enine) are preferred as glucose donors for cholesterol glucosylation when compared with GlcCer containing same chain length of saturated fatty acids (such as beta-D-glucosyl-N-octadecanoyl-sphing-4-enine). Under specific conditions, may alternatively catalyze the reverse reaction, transferring glucose from cholesteryl 3-beta-D-glucoside to ceramide. Can also hydrolyze cholesteryl 3-beta-D-glucoside producing glucose and cholesterol. Catalyzes the hydrolysis of galactosylceramides/GalCers (such as beta-D-galactosyl-(1&lt;-&gt;1')-N-acylsphing-4-enine), as well as the transfer of galactose between GalCers and cholesterol in vitro, but with lower activity than with GlcCers. Contrary to GlcCer and GalCer, xylosylceramide/XylCer (such as beta-D-xyosyl-(1&lt;-&gt;1')-N-acylsphing-4-enine) is not a good substrate for hydrolysis, however it is a good xylose donor for transxylosylation activity to form cholesteryl 3-beta-D-xyloside. The sequence is that of Lysosomal acid glucosylceramidase (Gba1) from Mus musculus (Mouse).